Consider the following 1271-residue polypeptide: Breakpoint cluster region protein (1271 aa).

An N-acetylmethionine modification is found at Met-1. The segment at 1-426 (MVDPVGFAEA…DGEGAFHGDA (426 aa)) is kinase. The stretch at 28–55 (VGDIEQELERCKASIRRLEQEVNQERFR) forms a coiled coil. The segment at 67–173 (KKSYDRQRWG…GHGQPGADAE (107 aa)) is disordered. Over residues 87–105 (ASEPRASASRPQPAPADGA) the composition is skewed to low complexity. Phosphoserine is present on Ser-122. The span at 123-138 (PGKARPGTARRPGAAA) shows a compositional bias: low complexity. Residue Ser-139 is modified to Phosphoserine. A Phosphotyrosine; by HCK modification is found at Tyr-177. Residues 185–198 (ERGLVKVNDKEVSD) are compositionally biased toward basic and acidic residues. Disordered stretches follow at residues 185-247 (ERGL…GDYE), 286-392 (GMME…HKRH), and 416-476 (NDGE…SRDA). Residues 197–385 (SDRISSLGSQ…QSFDSSSPPT (189 aa)) form a binding to ABL SH2-domain region. Residues 199–208 (RISSLGSQAM) are compositionally biased toward polar residues. Phosphoserine occurs at positions 202, 215, 222, and 236. Tyr-246 carries the post-translational modification Phosphotyrosine; by FES. Composition is skewed to low complexity over residues 346–356 (SSGQSSRVSPS) and 369–382 (SPSQNSQQSFDSSS). Ser-356, Ser-377, and Ser-382 each carry phosphoserine. Thr-385 carries the phosphothreonine modification. The span at 441–451 (DRAEEQRRHQD) shows a compositional bias: basic and acidic residues. Phosphoserine is present on residues Ser-459 and Ser-463. Residue Arg-471 is modified to Omega-N-methylarginine. Phosphoserine occurs at positions 473 and 488. Positions 498 to 691 (MRKWVLSGIL…QNFLSSINEE (194 aa)) constitute a DH domain. At Tyr-554 the chain carries Phosphotyrosine. Thr-641 is subject to Phosphothreonine. A Phosphotyrosine modification is found at Tyr-644. The residue at position 693 (Thr-693) is a Phosphothreonine. The 159-residue stretch at 708 to 866 (QLLKDSFMVE…WRENIREQQK (159 aa)) folds into the PH domain. The C2 domain occupies 893 to 1020 (HSIPLTINKE…QDRDWQRTVI (128 aa)). At Ser-894 the chain carries Phosphoserine. Residues 1054 to 1248 (VKIAVVTKRE…VMSQVQVLLY (195 aa)) enclose the Rho-GAP domain. Ser-1264 carries the phosphoserine modification.

As to quaternary structure, homotetramer. Interacts with PDZK1. May interact with CCPG1. Interacts with FES/FPS, ABL1, PIK3R1 and GRB2. Interacts with HCK. Interacts with SH2D5. Interacts with DLG4. Autophosphorylated. Phosphorylated by FES/FPS on tyrosine residues, leading to down-regulation of the BCR kinase activity. Phosphorylation at Tyr-177 by HCK is important for interaction with GRB2.

It is found in the postsynaptic density. The protein resides in the cell projection. The protein localises to the dendritic spine. Its subcellular location is the axon. It localises to the synapse. It carries out the reaction L-seryl-[protein] + ATP = O-phospho-L-seryl-[protein] + ADP + H(+). It catalyses the reaction L-threonyl-[protein] + ATP = O-phospho-L-threonyl-[protein] + ADP + H(+). Functionally, protein with a unique structure having two opposing regulatory activities toward small GTP-binding proteins. The C-terminus is a GTPase-activating protein (GAP) domain which stimulates GTP hydrolysis by RAC1, RAC2 and CDC42. Accelerates the intrinsic rate of GTP hydrolysis of RAC1 or CDC42, leading to down-regulation of the active GTP-bound form. The central Dbl homology (DH) domain functions as guanine nucleotide exchange factor (GEF) that modulates the GTPases CDC42, RHOA and RAC1. Promotes the conversion of CDC42, RHOA and RAC1 from the GDP-bound to the GTP-bound form. The amino terminus contains an intrinsic kinase activity. Functions as an important negative regulator of neuronal RAC1 activity. Regulates macrophage functions such as CSF1-directed motility and phagocytosis through the modulation of RAC1 activity. Plays a major role as a RHOA GEF in keratinocytes being involved in focal adhesion formation and keratinocyte differentiation. The protein is Breakpoint cluster region protein of Homo sapiens (Human).